The following is a 156-amino-acid chain: Transcriptional regulator MraZ (156 aa).

SpoVT-AbrB domains lie at lysine 7–valine 64 and leucine 93–arginine 136.

This sequence belongs to the MraZ family. In terms of assembly, forms oligomers.

It is found in the cytoplasm. Its subcellular location is the nucleoid. This Chlorobium phaeovibrioides (strain DSM 265 / 1930) (Prosthecochloris vibrioformis (strain DSM 265)) protein is Transcriptional regulator MraZ.